Reading from the N-terminus, the 194-residue chain is Peptidyl-tRNA hydrolase (194 aa).

TRNA is bound at residue Tyr16. His21 acts as the Proton acceptor in catalysis. TRNA-binding residues include Phe67, Asn69, and Asn115.

Belongs to the PTH family. As to quaternary structure, monomer.

The protein resides in the cytoplasm. The enzyme catalyses an N-acyl-L-alpha-aminoacyl-tRNA + H2O = an N-acyl-L-amino acid + a tRNA + H(+). In terms of biological role, hydrolyzes ribosome-free peptidyl-tRNAs (with 1 or more amino acids incorporated), which drop off the ribosome during protein synthesis, or as a result of ribosome stalling. Functionally, catalyzes the release of premature peptidyl moieties from peptidyl-tRNA molecules trapped in stalled 50S ribosomal subunits, and thus maintains levels of free tRNAs and 50S ribosomes. The chain is Peptidyl-tRNA hydrolase from Escherichia coli O17:K52:H18 (strain UMN026 / ExPEC).